Reading from the N-terminus, the 218-residue chain is Glutathione S-transferase Mu 1 (218 aa).

The region spanning 2–88 (PMTLGYWDVR…YLARKHGLCG (87 aa)) is the GST N-terminal domain. Residues 7-8 (YW), 46-50 (WLSEK), 59-60 (NL), and 72-73 (QS) contribute to the glutathione site. In terms of domain architecture, GST C-terminal spans 90–208 (TEEERIRVDI…KSSRFIRVPV (119 aa)). Y116 contributes to the substrate binding site.

The protein belongs to the GST superfamily. Mu family. In terms of assembly, homodimer. In terms of tissue distribution, well expressed in rabbit liver, brain and kidney.

Its subcellular location is the cytoplasm. The catalysed reaction is RX + glutathione = an S-substituted glutathione + a halide anion + H(+). Its function is as follows. Conjugation of reduced glutathione to a wide number of exogenous and endogenous hydrophobic electrophiles. The polypeptide is Glutathione S-transferase Mu 1 (Oryctolagus cuniculus (Rabbit)).